Here is a 336-residue protein sequence, read N- to C-terminus: Ornithine carbamoyltransferase, catabolic (336 aa).

Residues 57 to 60 (STRT), Q84, R108, and 136 to 139 (HPTQ) each bind carbamoyl phosphate. L-ornithine-binding positions include N169, D233, and 237 to 238 (SM). Carbamoyl phosphate contacts are provided by residues 275–276 (CL) and R322.

This sequence belongs to the aspartate/ornithine carbamoyltransferase superfamily. OTCase family.

The protein localises to the cytoplasm. It catalyses the reaction carbamoyl phosphate + L-ornithine = L-citrulline + phosphate + H(+). The protein operates within amino-acid degradation; L-arginine degradation via ADI pathway; carbamoyl phosphate from L-arginine: step 2/2. Reversibly catalyzes the transfer of the carbamoyl group from carbamoyl phosphate (CP) to the N(epsilon) atom of ornithine (ORN) to produce L-citrulline. The polypeptide is Ornithine carbamoyltransferase, catabolic (Chromobacterium violaceum (strain ATCC 12472 / DSM 30191 / JCM 1249 / CCUG 213 / NBRC 12614 / NCIMB 9131 / NCTC 9757 / MK)).